We begin with the raw amino-acid sequence, 125 residues long: Glycine cleavage system H protein (125 aa).

In terms of domain architecture, Lipoyl-binding spans 21-103; it reads SVTIGISNQA…YSAGWIVKIK (83 aa). Lysine 62 is modified (N6-lipoyllysine).

It belongs to the GcvH family. As to quaternary structure, the glycine cleavage system is composed of four proteins: P, T, L and H. Requires (R)-lipoate as cofactor.

Functionally, the glycine cleavage system catalyzes the degradation of glycine. The H protein shuttles the methylamine group of glycine from the P protein to the T protein. This Psychromonas ingrahamii (strain DSM 17664 / CCUG 51855 / 37) protein is Glycine cleavage system H protein.